A 324-amino-acid chain; its full sequence is Glucokinase (324 aa).

6–11 (IDIGGT) provides a ligand contact to ATP.

It belongs to the bacterial glucokinase family.

The protein localises to the cytoplasm. It catalyses the reaction D-glucose + ATP = D-glucose 6-phosphate + ADP + H(+). In Zymomonas mobilis subsp. mobilis (strain ATCC 31821 / ZM4 / CP4), this protein is Glucokinase.